A 192-amino-acid polypeptide reads, in one-letter code: GTP cyclohydrolase-2 (192 aa).

50–54 (RLHSE) is a GTP binding site. Zn(2+) is bound by residues C55, C66, and C68. Residues 92–94 (EGR) and T114 contribute to the GTP site. D126 functions as the Proton acceptor in the catalytic mechanism. R128 serves as the catalytic Nucleophile. Residues T149 and K154 each coordinate GTP.

This sequence belongs to the GTP cyclohydrolase II family. Requires Zn(2+) as cofactor.

It catalyses the reaction GTP + 4 H2O = 2,5-diamino-6-hydroxy-4-(5-phosphoribosylamino)-pyrimidine + formate + 2 phosphate + 3 H(+). The protein operates within cofactor biosynthesis; riboflavin biosynthesis; 5-amino-6-(D-ribitylamino)uracil from GTP: step 1/4. Functionally, catalyzes the conversion of GTP to 2,5-diamino-6-ribosylamino-4(3H)-pyrimidinone 5'-phosphate (DARP), formate and pyrophosphate. This Helicobacter pylori (strain P12) protein is GTP cyclohydrolase-2.